A 382-amino-acid chain; its full sequence is Proton extrusion protein PxcA (382 aa).

4 helical membrane-spanning segments follow: residues 162–182, 257–277, 305–325, and 340–360; these read VLLL…TYLI, AIKN…VCLM, IILF…SVLL, and FVNL…KYWI.

Belongs to the CemA family.

The protein resides in the cell inner membrane. Required for H(+) efflux immediately after light irradiation to form a rapid H(+) concentration gradient across the thylakoid membranes. Together with PxcL, contributes to transient H(+) uptake following dark to light transition. This Synechococcus sp. (strain CC9605) protein is Proton extrusion protein PxcA.